Reading from the N-terminus, the 373-residue chain is Packaging protein 3 (373 aa).

The tract at residues 1–32 is disordered; that stretch reads MHPVLRQMRPQPRATTASAAVALSGSGEQEEP. The interaction with packaging protein 1 stretch occupies residues 1–150; that stretch reads MHPVLRQMRP…VTEERNFQKS (150 aa). Phosphoserine; by host occurs at positions 52 and 334.

It belongs to the adenoviridae packaging protein 3 family. As to quaternary structure, part of the genome packaging complex composed of packaging proteins 1, 2 and 3; this complex specifically binds to the packaging sequence on the left end of viral genomic DNA and performs packaging of the viral genome. Interacts with hexon-linking protein IIIa; this interaction is required to promote correct genome packaging. Post-translationally, cleaved at different sites by the viral protease during virion maturation.

The protein resides in the host nucleus. Involved in viral genome packaging through its interaction with packaging proteins 1 and 2. After proteolytic cleavage by adenovirus protease, L1 52/55k protein is removed from the capsid during viral maturation. The sequence is that of Packaging protein 3 from Homo sapiens (Human).